A 508-amino-acid polypeptide reads, in one-letter code: Cell division protein FtsZ (508 aa).

Residues 24–28 (GAGGN), 111–113 (GTG), Glu-142, Arg-146, and Asp-190 each bind GTP. Disordered stretches follow at residues 342–389 (IAET…SAPQ) and 428–508 (VAEE…RLAN). Residues 464 to 482 (QQASAPQAQARSAQSARPQ) are compositionally biased toward low complexity.

Belongs to the FtsZ family. In terms of assembly, homodimer. Polymerizes to form a dynamic ring structure in a strictly GTP-dependent manner. Interacts directly with several other division proteins.

The protein localises to the cytoplasm. Functionally, essential cell division protein that forms a contractile ring structure (Z ring) at the future cell division site. The regulation of the ring assembly controls the timing and the location of cell division. One of the functions of the FtsZ ring is to recruit other cell division proteins to the septum to produce a new cell wall between the dividing cells. Binds GTP and shows GTPase activity. The polypeptide is Cell division protein FtsZ (Caulobacter vibrioides (strain ATCC 19089 / CIP 103742 / CB 15) (Caulobacter crescentus)).